The primary structure comprises 225 residues: Phosphoserine phosphatase (225 aa).

At methionine 1 the chain carries N-acetylmethionine. The active-site Nucleophile is the aspartate 20. Residues aspartate 20 and aspartate 22 each contribute to the Mg(2+) site. 20 to 22 (DVD) is an L-serine binding site. Aspartate 22 serves as the catalytic Proton donor. Methionine 52 serves as a coordination point for O-phospho-L-serine. Residue glycine 53 coordinates phosphate. Residues 109–111 (SGG) and lysine 158 each bind L-serine. O-phospho-L-serine contacts are provided by residues 109 to 111 (SGG) and lysine 158. Aspartate 179 is a binding site for Mg(2+). Threonine 182 is a binding site for O-phospho-L-serine. Residue threonine 182 participates in phosphate binding.

Belongs to the HAD-like hydrolase superfamily. SerB family. Homodimer. Requires Mg(2+) as cofactor.

It is found in the cytoplasm. The protein resides in the cytosol. The enzyme catalyses O-phospho-L-serine + H2O = L-serine + phosphate. It carries out the reaction O-phospho-D-serine + H2O = D-serine + phosphate. Its pathway is amino-acid biosynthesis; L-serine biosynthesis; L-serine from 3-phospho-D-glycerate: step 3/3. Catalyzes the last irreversible step in the biosynthesis of L-serine from carbohydrates, the dephosphorylation of O-phospho-L-serine to L-serine. L-serine can then be used in protein synthesis, to produce other amino acids, in nucleotide metabolism or in glutathione synthesis, or can be racemized to D-serine, a neuromodulator. May also act on O-phospho-D-serine. This chain is Phosphoserine phosphatase, found in Mus musculus (Mouse).